The following is a 708-amino-acid chain: Exocyst complex component 5 (708 aa).

Ala-2 is subject to N-acetylalanine. Residues 40–101 are a coiled coil; the sequence is KRLLEEFVNH…AFQHFQELDE (62 aa). Residues Thr-122, Thr-395, and Thr-405 each carry the phosphothreonine modification. Ser-412 is modified (phosphoserine).

Belongs to the SEC10 family. In terms of assembly, the exocyst complex is composed of EXOC1, EXOC2, EXOC3, EXOC4, EXOC5, EXOC6, EXOC7 and EXOC8. Interacts with EXOC3L1.

The protein resides in the cytoplasm. It is found in the midbody. In terms of biological role, component of the exocyst complex involved in the docking of exocytic vesicles with fusion sites on the plasma membrane. This is Exocyst complex component 5 (Exoc5) from Mus musculus (Mouse).